The sequence spans 125 residues: Small ribosomal subunit protein uS12 (125 aa).

Positions 1–26 (MPTINQLVRKSRKTVKAQSDSPALKN) are disordered. The residue at position 89 (aspartate 89) is a 3-methylthioaspartic acid.

It belongs to the universal ribosomal protein uS12 family. Part of the 30S ribosomal subunit. Contacts proteins S8 and S17. May interact with IF1 in the 30S initiation complex.

With S4 and S5 plays an important role in translational accuracy. In terms of biological role, interacts with and stabilizes bases of the 16S rRNA that are involved in tRNA selection in the A site and with the mRNA backbone. Located at the interface of the 30S and 50S subunits, it traverses the body of the 30S subunit contacting proteins on the other side and probably holding the rRNA structure together. The combined cluster of proteins S8, S12 and S17 appears to hold together the shoulder and platform of the 30S subunit. The chain is Small ribosomal subunit protein uS12 from Clostridium tetani (strain Massachusetts / E88).